Here is a 283-residue protein sequence, read N- to C-terminus: Octanoyl-[GcvH]:protein N-octanoyltransferase (283 aa).

Positions 42 to 248 constitute a BPL/LPL catalytic domain; it reads GQSDAVVRTW…TLQSFGGELY (207 aa). C147 serves as the catalytic Acyl-thioester intermediate.

This sequence belongs to the octanoyltransferase LipL family.

It catalyses the reaction N(6)-octanoyl-L-lysyl-[glycine-cleavage complex H protein] + L-lysyl-[lipoyl-carrier protein] = N(6)-octanoyl-L-lysyl-[lipoyl-carrier protein] + L-lysyl-[glycine-cleavage complex H protein]. The protein operates within protein modification; protein lipoylation via endogenous pathway; protein N(6)-(lipoyl)lysine from octanoyl-[acyl-carrier-protein]. Catalyzes the amidotransfer (transamidation) of the octanoyl moiety from octanoyl-GcvH to the lipoyl domain of the E2 subunit of lipoate-dependent enzymes. The sequence is that of Octanoyl-[GcvH]:protein N-octanoyltransferase from Geobacillus kaustophilus (strain HTA426).